Consider the following 290-residue polypeptide: Arylamine N-acetyltransferase 1 (290 aa).

The residue at position 1 (Met1) is an N-acetylmethionine. The active-site Acyl-thioester intermediate is the Cys68. CoA contacts are provided by Thr103 and Gly104. Position 106–107 (106–107 (IH)) interacts with substrate. Active-site residues include His107 and Asp122. CoA-binding residues include Tyr208 and Ser214.

It belongs to the arylamine N-acetyltransferase family.

It is found in the cytoplasm. It carries out the reaction an arylamine + acetyl-CoA = an N-acetylarylamine + CoA. This Oryctolagus cuniculus (Rabbit) protein is Arylamine N-acetyltransferase 1 (NAT1).